A 280-amino-acid polypeptide reads, in one-letter code: Lysosome-associated membrane glycoprotein 5 (280 aa).

The first 29 residues, methionine 1–alanine 29, serve as a signal peptide directing secretion. Residues glutamate 30–glutamate 235 are Extracellular-facing. Asparagine 35, asparagine 53, and asparagine 127 each carry an N-linked (GlcNAc...) asparagine glycan. The chain crosses the membrane as a helical span at residues threonine 236–tyrosine 256. The Cytoplasmic portion of the chain corresponds to histidine 257 to glycine 280.

Belongs to the LAMP family. In terms of processing, glycosylated. As to expression, expressed in plasmocytoid dendritic cells. Expressed in suprabasal skin keratinocytes and squamous cells (at protein level). Expressed in the brain and weakly in spleen and skin. Expressed in plasmocytoid dendritic cells.

The protein resides in the cell membrane. It localises to the cytoplasmic vesicle. It is found in the secretory vesicle. Its subcellular location is the synaptic vesicle membrane. The protein localises to the endoplasmic reticulum-Golgi intermediate compartment membrane. The protein resides in the endosome membrane. It localises to the cytoplasmic vesicle membrane. It is found in the cell projection. Its subcellular location is the dendrite. The protein localises to the growth cone membrane. The protein resides in the early endosome membrane. It localises to the recycling endosome. Its function is as follows. Plays a role in short-term synaptic plasticity in a subset of GABAergic neurons in the brain. The polypeptide is Lysosome-associated membrane glycoprotein 5 (LAMP5) (Homo sapiens (Human)).